A 241-amino-acid chain; its full sequence is DNA repair protein RecO (241 aa).

The protein belongs to the RecO family.

Its function is as follows. Involved in DNA repair and RecF pathway recombination. This chain is DNA repair protein RecO, found in Dinoroseobacter shibae (strain DSM 16493 / NCIMB 14021 / DFL 12).